The sequence spans 436 residues: YRLTYYTPDYQVAETDILAAFRMTPQPGVPAEECGAAVAAESSTGTWTTVWTDGLTQLDRYKGRCYDLEPVPGESNRYIAYIAYPIDLFEEGSVTNLLTSIVGNVFGFKALRALRLEDLRIPPDYAKTFWGPPHGIQAERDRLNKYGRPLLGCTVKPKLGLSAKNYGRAVYECLRGGLDFTKDDENVNSQSVMRWRDRSXFCAEAIYKAQAETGEVKGHYLNATAGTVEEMFKRAVFSAQLGVPIIMHDYITGGFTANTSLSMYCRDNGLLLHIHRAMHAVIDRQRNHGIHFRVLAKTLRMSGGDHLHSGTVVGKLEGEREVTLGFVDLMRDPYVEKDRSRGIYFTQDWCGMGGTMPVASGGIHVWHMPALTEIFGDDACLQFGGGTLGHPWGNRPGAAANRVASEACVQARNEGRDLSREGGDVIREACKWSPEL.

Positions 104 and 154 each coordinate substrate. Residue K156 is the Proton acceptor of the active site. K158 is a binding site for substrate. Residues K182, D184, and E185 each coordinate Mg(2+). K182 carries the post-translational modification N6-carboxylysine. Residue H275 is the Proton acceptor of the active site. Substrate is bound by residues R276, H308, and S360.

The protein belongs to the RuBisCO large chain family. Type I subfamily. Heterohexadecamer of 8 large chains and 8 small chains. Mg(2+) serves as cofactor.

Its subcellular location is the plastid. The protein localises to the chloroplast. It catalyses the reaction 2 (2R)-3-phosphoglycerate + 2 H(+) = D-ribulose 1,5-bisphosphate + CO2 + H2O. The catalysed reaction is D-ribulose 1,5-bisphosphate + O2 = 2-phosphoglycolate + (2R)-3-phosphoglycerate + 2 H(+). In terms of biological role, ruBisCO catalyzes two reactions: the carboxylation of D-ribulose 1,5-bisphosphate, the primary event in carbon dioxide fixation, as well as the oxidative fragmentation of the pentose substrate in the photorespiration process. Both reactions occur simultaneously and in competition at the same active site. The protein is Ribulose bisphosphate carboxylase large chain of Euglena stellata.